The sequence spans 193 residues: Transmembrane protein 066L (193 aa).

2 consecutive transmembrane segments (helical) span residues 14 to 34 (VLFA…GLVW) and 48 to 68 (LVVE…LVVV).

Belongs to the IIV-6 357R family.

It is found in the membrane. The polypeptide is Transmembrane protein 066L (Invertebrate iridescent virus 3 (IIV-3)).